We begin with the raw amino-acid sequence, 607 residues long: Autophagy-related protein 22-2 (607 aa).

The disordered stretch occupies residues 1–29; the sequence is MTVAPPSPNSPAAELQQRPPRYPGEDTTP. The helical transmembrane segment at 41–61 threads the bilayer; the sequence is YGIAAEVFAVCGVGSFLPLTL. A glycan (N-linked (GlcNAc...) asparagine) is linked at N89. Transmembrane regions (helical) follow at residues 119 to 139, 151 to 170, and 188 to 208; these read SFAMYTFSLAVLVQALTLISF, TLLLAFGFIGSATSMLFVFI, and CLGSSFVVLNSFLPVLVANDP. The segment at 235–263 is disordered; it reads SFSASDAESGPHPAAEAGSGTSSGPASPE. The segment covering 247 to 263 has biased composition (low complexity); the sequence is PAAEAGSGTSSGPASPE. 4 consecutive transmembrane segments (helical) span residues 274-294, 307-327, 379-399, and 415-435; these read GVGLGYCAAVLVQILSISLLF, TLPLRFVLLLVGIWWFSFTMV, VLVFLAAWFLLSDAMATVSGT, and VGLLSITATLSGMAGAFLWPV. Residue N445 is glycosylated (N-linked (GlcNAc...) asparagine). 4 helical membrane-spanning segments follow: residues 450-470, 485-507, 519-541, and 550-570; these read LCIALFEIIPLYGMLAYIPVF, FPLAIVHGVVSGGLSSYCRSFFG, YALYAATDKGSSVIGPAIVGMLI, and GFFFIAPLILMPIPLIWIVNA. The segment at 586-607 is disordered; sequence KGHETEMSEQTEEAEGLLARGI.

The protein belongs to the ATG22 family.

It localises to the vacuole membrane. Its function is as follows. Vacuolar effluxer which mediate the efflux of amino acids resulting from autophagic degradation. The release of autophagic amino acids allows the maintenance of protein synthesis and viability during nitrogen starvation. The polypeptide is Autophagy-related protein 22-2 (atg22-2) (Aspergillus oryzae (strain ATCC 42149 / RIB 40) (Yellow koji mold)).